The primary structure comprises 274 residues: ATP synthase subunit a (274 aa).

5 helical membrane-spanning segments follow: residues 43–63, 103–123, 149–169, 223–243, and 245–265; these read TLNI…LLVF, VIAP…MMDL, DVSI…FYSI, LIFI…LSVP, and AIFH…LTIV.

It belongs to the ATPase A chain family. In terms of assembly, F-type ATPases have 2 components, CF(1) - the catalytic core - and CF(0) - the membrane proton channel. CF(1) has five subunits: alpha(3), beta(3), gamma(1), delta(1), epsilon(1). CF(0) has three main subunits: a(1), b(2) and c(9-12). The alpha and beta chains form an alternating ring which encloses part of the gamma chain. CF(1) is attached to CF(0) by a central stalk formed by the gamma and epsilon chains, while a peripheral stalk is formed by the delta and b chains.

It localises to the cell inner membrane. In terms of biological role, key component of the proton channel; it plays a direct role in the translocation of protons across the membrane. This chain is ATP synthase subunit a, found in Yersinia pestis bv. Antiqua (strain Angola).